The sequence spans 848 residues: Neurofilament medium polypeptide (848 aa).

Polar residues predominate over residues 1 to 10 (MSYTLDSLGN). Residues 1-51 (MSYTLDSLGNPSAYRRVTETRSSFSRVSGSPSSGFRSQSWSRGSPSTVSSS) are disordered. Residue S2 is modified to N-acetylserine. The head stretch occupies residues 2–102 (SYTLDSLGNP…KLSRSNEKEQ (101 aa)). Low complexity predominate over residues 21–44 (RSSFSRVSGSPSSGFRSQSWSRGS). The residue at position 30 (S30) is a Phosphoserine. At R42 the chain carries Omega-N-methylarginine. Residue T47 is glycosylated (O-linked (GlcNAc) threonine). S97 is subject to Phosphoserine. One can recognise an IF rod domain in the interval 99–410 (EKEQLQGLND…KLLEGEETRF (312 aa)). Residues 103 to 134 (LQGLNDRFAGYIEKVHYLEQQNKEIEAEIQAL) are coil 1A. Residues 135–147 (RQKQASHAQLGDA) are linker 1. The coil 1B stretch occupies residues 148–246 (YDQEIRELRA…EEEVADLLAQ (99 aa)). Residue S224 is modified to Phosphoserine. The tract at residues 247–263 (IQASHITVERKDYLKTD) is linker 12. The segment at 264 to 285 (ISTALKEIRSQLECHSDQNMHQ) is coil 2A. The tract at residues 286–289 (AEEW) is linker 2. A coil 2B region spans residues 290–410 (FKCRYAKLTE…KLLEGEETRF (121 aa)). Phosphotyrosine is present on Y318. S344, S416, and S428 each carry phosphoserine. The segment at 411–848 (STFSGSITGP…AIVKEVTQGD (438 aa)) is tail. T430 carries O-linked (GlcNAc) threonine glycosylation. S466 and S482 each carry phosphoserine. The disordered stretch occupies residues 482-785 (SAKEEKEEAE…GEDSSDDKVV (304 aa)). Over residues 488–498 (EEAEEKEEEPE) the composition is skewed to acidic residues. Residues 499–509 (AEKSPVKSPEA) show a composition bias toward basic and acidic residues. Phosphoserine is present on residues S502 and S506. The span at 510–533 (KEEEEEGEKEEEEEGQEEEEEEDE) shows a compositional bias: acidic residues. Residues 534–553 (GVKSDQAEEGGSEKEGSSEK) are compositionally biased toward basic and acidic residues. A phosphoserine mark is found at S537, S545, S550, and S551. Acidic residues predominate over residues 554 to 576 (DEGEQEEEEGETEAEGEGEEAEA). Residue T565 is modified to Phosphothreonine. The segment covering 577–604 (KEEKKIEGKVEEVAVKEEIKVEKPEKAK) has biased composition (basic and acidic residues). Phosphoserine occurs at positions 605 and 610. Basic and acidic residues-rich tracts occupy residues 611–677 (PVEE…KAVE) and 689–711 (SLEK…KAEE). T642 carries the phosphothreonine modification. Residues S645, S669, S689, S715, S723, S753, and S769 each carry the phosphoserine modification. Basic and acidic residues-rich tracts occupy residues 720–732 (SDRS…KEDI) and 748–760 (TQEK…EEKG). Residues 771–785 (AEEKKGEDSSDDKVV) show a composition bias toward basic and acidic residues.

It belongs to the intermediate filament family. Forms heterodimers with NEFL; which can further hetero-oligomerize (in vitro). Forms heterodimers with INA (in vitro). Post-translationally, there are a number of repeats of the tripeptide K-S-P, NFM is phosphorylated on a number of the serines in this motif. It is thought that phosphorylation of NFM results in the formation of interfilament cross bridges that are important in the maintenance of axonal caliber. Phosphorylation seems to play a major role in the functioning of the larger neurofilament polypeptides (NF-M and NF-H), the levels of phosphorylation being altered developmentally and coincidentally with a change in the neurofilament function. In terms of processing, phosphorylated in the head and rod regions by the PKC kinase PKN1, leading to the inhibition of polymerization. Expressed in the sciatic nerve (at protein level).

It localises to the cytoplasm. Its subcellular location is the cytoskeleton. The protein resides in the cell projection. It is found in the axon. Neurofilaments usually contain three intermediate filament proteins: NEFL, NEFM, and NEFH which are involved in the maintenance of neuronal caliber. May additionally cooperate with the neuronal intermediate filament proteins PRPH and INA to form neuronal filamentous networks. This chain is Neurofilament medium polypeptide (Nefm), found in Mus musculus (Mouse).